Consider the following 292-residue polypeptide: 1D-myo-inositol 2-acetamido-2-deoxy-alpha-D-glucopyranoside deacetylase (292 aa).

3 residues coordinate Zn(2+): histidine 12, aspartate 15, and histidine 147.

It belongs to the MshB deacetylase family. The cofactor is Zn(2+).

It carries out the reaction 1D-myo-inositol 2-acetamido-2-deoxy-alpha-D-glucopyranoside + H2O = 1D-myo-inositol 2-amino-2-deoxy-alpha-D-glucopyranoside + acetate. Catalyzes the deacetylation of 1D-myo-inositol 2-acetamido-2-deoxy-alpha-D-glucopyranoside (GlcNAc-Ins) in the mycothiol biosynthesis pathway. In Rhodococcus opacus (strain B4), this protein is 1D-myo-inositol 2-acetamido-2-deoxy-alpha-D-glucopyranoside deacetylase.